The sequence spans 370 residues: DNA replication and repair protein RecF (370 aa).

33 to 40 (GPNAAGKT) contributes to the ATP binding site.

The protein belongs to the RecF family.

The protein localises to the cytoplasm. Functionally, the RecF protein is involved in DNA metabolism; it is required for DNA replication and normal SOS inducibility. RecF binds preferentially to single-stranded, linear DNA. It also seems to bind ATP. The protein is DNA replication and repair protein RecF of Moorella thermoacetica (strain ATCC 39073 / JCM 9320).